The chain runs to 562 residues: Nucleoprotein (562 aa).

A binding site for the cap structure m7GTP region spans residues 53-238 (MRRERRDDND…ITQEESQINI (186 aa)). Mn(2+) contacts are provided by Asp-381 and Glu-383. Positions 391, 498, 501, and 522 each coordinate Zn(2+). Residue Asp-526 coordinates Mn(2+).

The protein belongs to the arenaviridae nucleocapsid protein family. Homomultimerizes to form the nucleocapsid. Binds to viral genomic RNA. Interacts with glycoprotein G2. Interacts with protein Z; this interaction probably directs the encapsidated genome to budding sites. Interacts with protein L; this interaction does not interfere with Z-L interaction. Interacts with host IKBKE (via Protein kinase domain); the interaction inhibits IKBKE kinase activity.

The protein localises to the virion. The protein resides in the host cytoplasm. Its function is as follows. Encapsidates the genome, protecting it from nucleases. The encapsidated genomic RNA is termed the nucleocapsid (NC). Serves as template for viral transcription and replication. The increased presence of protein N in host cell does not seem to trigger the switch from transcription to replication as observed in other negative strain RNA viruses. Through the interaction with host IKBKE, strongly inhibits the phosphorylation and nuclear translocation of host IRF3, a protein involved in interferon activation pathway, leading to the inhibition of interferon-beta and IRF3-dependent promoters activation. Also encodes a functional 3'-5' exoribonuclease that degrades preferentially dsRNA substrates and thereby participates in the suppression of interferon induction. This Tamiami mammarenavirus (isolate Rat/United States/W 10777/1964) (TAMV) protein is Nucleoprotein.